The following is a 99-amino-acid chain: Integration host factor subunit beta (99 aa).

The protein belongs to the bacterial histone-like protein family. In terms of assembly, heterodimer of an alpha and a beta chain.

Its function is as follows. This protein is one of the two subunits of integration host factor, a specific DNA-binding protein that functions in genetic recombination as well as in transcriptional and translational control. This Laribacter hongkongensis (strain HLHK9) protein is Integration host factor subunit beta.